The primary structure comprises 104 residues: NADH-quinone oxidoreductase subunit K (104 aa).

Helical transmembrane passes span 4–24 (VAYYLVLSAILFSIGVGAFLI), 28–48 (IITIFMSIELMLNAVNLSFVA), and 64–84 (IFVFFVMVVAAAEAAVGLAII).

Belongs to the complex I subunit 4L family. NDH-1 is composed of 14 different subunits. Subunits NuoA, H, J, K, L, M, N constitute the membrane sector of the complex.

The protein resides in the cell inner membrane. The enzyme catalyses a quinone + NADH + 5 H(+)(in) = a quinol + NAD(+) + 4 H(+)(out). Functionally, NDH-1 shuttles electrons from NADH, via FMN and iron-sulfur (Fe-S) centers, to quinones in the respiratory chain. The immediate electron acceptor for the enzyme in this species is believed to be ubiquinone. Couples the redox reaction to proton translocation (for every two electrons transferred, four hydrogen ions are translocated across the cytoplasmic membrane), and thus conserves the redox energy in a proton gradient. The chain is NADH-quinone oxidoreductase subunit K from Acidobacterium capsulatum (strain ATCC 51196 / DSM 11244 / BCRC 80197 / JCM 7670 / NBRC 15755 / NCIMB 13165 / 161).